We begin with the raw amino-acid sequence, 634 residues long: Kelch-like protein 22 (634 aa).

A2 bears the N-acetylalanine mark. Residues 50-117 (FDVVLVVEGR…IYTSELELSL (68 aa)) enclose the BTB domain. Kelch repeat units follow at residues 299–349 (CVVG…VLNN), 350–399 (FVYL…VVGR), 400–446 (YIYA…TLEG), 448–493 (MYVT…TLLD), 494–544 (KLYV…VLDT), and 545–593 (RIYV…VLTL). A Phosphothreonine modification is found at T463. Y466 carries the phosphotyrosine modification. Positions 600-634 (EPPRGTPDRSQADPDFASEVMSVSDWEEFDNSSED) are disordered. Residue T605 is modified to Phosphothreonine. The segment covering 624-634 (DWEEFDNSSED) has biased composition (acidic residues).

In terms of assembly, component of the BCR(KLHL22) E3 ubiquitin ligase complex, at least composed of CUL3, KLHL22 and RBX1. Interacts with PLK1. Interacts with DEPDC5 (via DEP domain); the interaction depends on amino acid availability. Interacts with YWHAE; required for the nuclear localization of KLHL22 upon amino acid starvation.

Its subcellular location is the cytoplasm. It is found in the cytosol. It localises to the cytoskeleton. The protein resides in the microtubule organizing center. The protein localises to the centrosome. Its subcellular location is the spindle. It is found in the nucleus. It localises to the lysosome. The protein operates within protein modification; protein ubiquitination. Functionally, substrate-specific adapter of a BCR (BTB-CUL3-RBX1) E3 ubiquitin ligase complex required for chromosome alignment and localization of PLK1 at kinetochores. The BCR(KLHL22) ubiquitin ligase complex mediates monoubiquitination of PLK1, leading to PLK1 dissociation from phosphoreceptor proteins and subsequent removal from kinetochores, allowing silencing of the spindle assembly checkpoint (SAC) and chromosome segregation. Monoubiquitination of PLK1 does not lead to PLK1 degradation. The BCR(KLHL22) ubiquitin ligase complex is also responsible for the amino acid-stimulated 'Lys-48' polyubiquitination and proteasomal degradation of DEPDC5. Through the degradation of DEPDC5, releases the GATOR1 complex-mediated inhibition of the TORC1 pathway. It is therefore an amino acid-dependent activator within the amino acid-sensing branch of the TORC1 pathway, indirectly regulating different cellular processes including cell growth and autophagy. This Ailuropoda melanoleuca (Giant panda) protein is Kelch-like protein 22 (KLHL22).